The primary structure comprises 329 residues: Urease accessory protein UreD 2 (329 aa).

The interval 100–120 (YSRPSDSSKFTNGTQSANSNT) is disordered. Residues 103-120 (PSDSSKFTNGTQSANSNT) show a composition bias toward polar residues.

The protein belongs to the UreD family. As to quaternary structure, ureD, UreF and UreG form a complex that acts as a GTP-hydrolysis-dependent molecular chaperone, activating the urease apoprotein by helping to assemble the nickel containing metallocenter of UreC. The UreE protein probably delivers the nickel.

The protein resides in the cytoplasm. Required for maturation of urease via the functional incorporation of the urease nickel metallocenter. This is Urease accessory protein UreD 2 from Psychrobacter cryohalolentis (strain ATCC BAA-1226 / DSM 17306 / VKM B-2378 / K5).